A 380-amino-acid chain; its full sequence is Serpin B7 (380 aa).

The residue at position 217 (Ser217) is a Phosphoserine.

Belongs to the serpin family. Ov-serpin subfamily.

The protein resides in the cytoplasm. Functionally, might function as an inhibitor of Lys-specific proteases. Might influence the maturation of megakaryocytes via its action as a serpin. This is Serpin B7 (Serpinb7) from Mus musculus (Mouse).